We begin with the raw amino-acid sequence, 259 residues long: Ribosome maturation factor RimP (259 aa).

The segment covering Arg-186–Lys-195 has biased composition (basic and acidic residues). The interval Arg-186–Asp-259 is disordered. The span at Lys-239–Ser-248 shows a compositional bias: basic residues.

This sequence belongs to the RimP family.

The protein localises to the cytoplasm. Functionally, required for maturation of 30S ribosomal subunits. The sequence is that of Ribosome maturation factor RimP from Rhodopseudomonas palustris (strain HaA2).